The primary structure comprises 179 residues: Large ribosomal subunit protein uL5 (179 aa).

The protein belongs to the universal ribosomal protein uL5 family. Part of the 50S ribosomal subunit; part of the 5S rRNA/L5/L18/L25 subcomplex. Contacts the 5S rRNA and the P site tRNA. Forms a bridge to the 30S subunit in the 70S ribosome.

This is one of the proteins that bind and probably mediate the attachment of the 5S RNA into the large ribosomal subunit, where it forms part of the central protuberance. In the 70S ribosome it contacts protein S13 of the 30S subunit (bridge B1b), connecting the 2 subunits; this bridge is implicated in subunit movement. Contacts the P site tRNA; the 5S rRNA and some of its associated proteins might help stabilize positioning of ribosome-bound tRNAs. This chain is Large ribosomal subunit protein uL5, found in Ectopseudomonas mendocina (strain ymp) (Pseudomonas mendocina).